The sequence spans 469 residues: 3-isopropylmalate dehydratase large subunit (469 aa).

3 residues coordinate [4Fe-4S] cluster: cysteine 347, cysteine 408, and cysteine 411.

Belongs to the aconitase/IPM isomerase family. LeuC type 1 subfamily. In terms of assembly, heterodimer of LeuC and LeuD. The cofactor is [4Fe-4S] cluster.

It catalyses the reaction (2R,3S)-3-isopropylmalate = (2S)-2-isopropylmalate. It participates in amino-acid biosynthesis; L-leucine biosynthesis; L-leucine from 3-methyl-2-oxobutanoate: step 2/4. Catalyzes the isomerization between 2-isopropylmalate and 3-isopropylmalate, via the formation of 2-isopropylmaleate. This chain is 3-isopropylmalate dehydratase large subunit, found in Actinobacillus pleuropneumoniae serotype 7 (strain AP76).